The chain runs to 224 residues: 2,5-diamino-6-ribosylamino-4(3H)-pyrimidinone 5'-phosphate reductase (224 aa).

Residues T57, D61, 82–85 (STAN), V131, and 153–156 (GASI) each bind NADP(+).

It belongs to the HTP reductase family. As to quaternary structure, homodimer.

The enzyme catalyses 2,5-diamino-6-(1-D-ribitylamino)pyrimidin-4(3H)-one 5'-phosphate + NADP(+) = 2,5-diamino-6-(1-D-ribosylamino)pyrimidin-4(3H)-one 5'-phosphate + NADPH + H(+). It carries out the reaction 2,5-diamino-6-(1-D-ribitylamino)pyrimidin-4(3H)-one 5'-phosphate + NAD(+) = 2,5-diamino-6-(1-D-ribosylamino)pyrimidin-4(3H)-one 5'-phosphate + NADH + H(+). Its pathway is cofactor biosynthesis; riboflavin biosynthesis. Its function is as follows. Catalyzes an early step in riboflavin biosynthesis, the NADPH-dependent reduction of the ribose side chain of 2,5-diamino-6-ribosylamino-4(3H)-pyrimidinone 5'-phosphate, yielding 2,5-diamino-6-ribitylamino-4(3H)-pyrimidinone 5'-phosphate. This Aquifex aeolicus (strain VF5) protein is 2,5-diamino-6-ribosylamino-4(3H)-pyrimidinone 5'-phosphate reductase (ribD2).